Reading from the N-terminus, the 192-residue chain is 3-hydroxyanthranilate 3,4-dioxygenase 1 (192 aa).

R50 lines the O2 pocket. H54, E60, and H102 together coordinate Fe cation. E60 serves as a coordination point for substrate. R106 and E116 together coordinate substrate. C131, C134, C168, and C171 together coordinate a divalent metal cation.

Belongs to the 3-HAO family. The cofactor is Fe(2+).

Its subcellular location is the cytoplasm. The catalysed reaction is 3-hydroxyanthranilate + O2 = (2Z,4Z)-2-amino-3-carboxymuconate 6-semialdehyde. It participates in cofactor biosynthesis; NAD(+) biosynthesis; quinolinate from L-kynurenine: step 3/3. Catalyzes the oxidative ring opening of 3-hydroxyanthranilate to 2-amino-3-carboxymuconate semialdehyde, which spontaneously cyclizes to quinolinate. This chain is 3-hydroxyanthranilate 3,4-dioxygenase 1 (bna1-1), found in Aspergillus oryzae (strain ATCC 42149 / RIB 40) (Yellow koji mold).